The chain runs to 163 residues: Ribosome maturation factor RimM (163 aa).

Residues 92–161 (PGEYYHHDLI…AETVTVNAAF (70 aa)) enclose the PRC barrel domain.

It belongs to the RimM family. Binds ribosomal protein uS19.

It is found in the cytoplasm. In terms of biological role, an accessory protein needed during the final step in the assembly of 30S ribosomal subunit, possibly for assembly of the head region. Essential for efficient processing of 16S rRNA. May be needed both before and after RbfA during the maturation of 16S rRNA. It has affinity for free ribosomal 30S subunits but not for 70S ribosomes. This chain is Ribosome maturation factor RimM, found in Sphingopyxis alaskensis (strain DSM 13593 / LMG 18877 / RB2256) (Sphingomonas alaskensis).